The primary structure comprises 250 residues: Probable transcriptional regulatory protein RER_29220 (250 aa).

This sequence belongs to the TACO1 family.

The protein localises to the cytoplasm. This Rhodococcus erythropolis (strain PR4 / NBRC 100887) protein is Probable transcriptional regulatory protein RER_29220.